Here is a 2161-residue protein sequence, read N- to C-terminus: DNA polymerase epsilon catalytic subunit A (2161 aa).

Short sequence motifs (nuclear localization signal) lie at residues 5–12, 1137–1144, and 1239–1246; these read NRRRDRKD, HKKVREKD, and LKKRKWKV. 4 residues coordinate Zn(2+): Cys-2038, Cys-2041, Cys-2063, and Cys-2068. The CysA-type zinc-finger motif lies at 2038–2068; sequence CSNCDAYRDLDICRDPALLTEKEWSCADTQC. [4Fe-4S] cluster contacts are provided by Cys-2099, Cys-2102, Cys-2114, and Cys-2116. The CysB motif motif lies at 2099–2116; the sequence is CIRCNQVKAAHLTEQCEC. Residues 2130 to 2137 carry the Nuclear localization signal 4 motif; sequence SKRMEIFM.

This sequence belongs to the DNA polymerase type-B family. Heterotetramer. Subunit of the DNA polymerase II. Interacts (via C-terminus) with DPB2. Interacts with LHP1/TFL2. Requires [4Fe-4S] cluster as cofactor. Mostly expressed at low levels in inflorescence (floral meristem and flowers until anthesis), and, to a lower extent, in roots, seeds and leaves.

It is found in the nucleus. The enzyme catalyses DNA(n) + a 2'-deoxyribonucleoside 5'-triphosphate = DNA(n+1) + diphosphate. DNA polymerase II, which participates in chromosomal DNA replication. Required for the timing and determination of cell fate during plant embryogenesis and root pole development, by promoting cell cycle and cell type patterning. Necessary for proper shoot (SAM) and root apical meristem (RAM) functions. Involved in maintaining epigenetic states, controlling hypersensitive response (HR), and mediating abscisic acid (ABA) signaling. Required for flowering repression through a mechanism involving epigenetic gene silencing. May participate in processes involved in chromatin-mediated cellular memory. This is DNA polymerase epsilon catalytic subunit A (POL2A) from Arabidopsis thaliana (Mouse-ear cress).